The primary structure comprises 478 residues: Transcription factor PIF1 (478 aa).

Threonine 10 is modified (phosphothreonine; by CK2). Disordered stretches follow at residues 56–80 (LHTKKPSSSPPKLLPSMDPQQQPSS), 122–144 (VSQVTAARPPVSSTNESRPPVRN), 172–210 (VRESTQVSPSATPSAAASESGLTRRTDGTDSSAVAGGGA), 230–294 (TSSS…LSER), and 391–478 (TQTH…HTTG). Low complexity predominate over residues 69–80 (LPSMDPQQQPSS). Low complexity predominate over residues 179–189 (SPSATPSAAAS). Residue threonine 197 is modified to Phosphothreonine; by CK2. Serine 202 is modified (phosphoserine; by CK2). Basic and acidic residues-rich tracts occupy residues 238-272 (SEIEPEKTNVDDRKRKEREATTTDETESRSEETKQ) and 284-294 (RAAEVHNLSER). A bHLH domain is found at 284 to 333 (RAAEVHNLSERKRRDRINERMKALQELIPRCNKSDKASMLDEAIEYMKSL). Polar residues predominate over residues 415–426 (PNQQYDPTSGQP). Serine 464, serine 465, serine 466, and serine 469 each carry phosphoserine; by CK2. Residues 465 to 478 (SSKESEDHGNHTTG) are compositionally biased toward basic and acidic residues.

As to quaternary structure, homodimer. Interacts with the photoactivated conformer (Pfr) of phytochromes A and B, PHYA and PHYB. Also interacts with APRR1/TOC1. Binds to RGL2, RGA and FHY3 (via N-terminus). Associates to PTAC12/HMR/PAP5 which acts as a transcriptional coactivator. Binds directly to PCH1 and PCHL; this interaction facilitates its association with phyB and its subsequent light-induced degradation. Phosphorylated at Thr-10, Thr-197, Ser-202, Ser-464, Ser-465, Ser-466 and Ser-469 by CK2. Phosphorylated and ubiquitinated after an exposure to light (especially red and far-red), in a phytochrome-dependent manner. Modified proteins undergo a proteasome-dependent degradation. Its stability and degradation plays a central role in photomorphogenesis of seedlings. As to expression, mainly expressed in leaves, stems and seedlings, and, to a lower extent, in fruits, flowers and roots.

The protein resides in the nucleus. DNA-binding ability is inhibited by PCH1 and PCHL to negatively regulate the expressions of its target genes. Transcription activator. Negatively regulates chlorophyll biosynthesis and seed germination in the dark, and lightinduced degradation of PIF1 relieves this negative regulation to promote photomorphogenesis. Binds to the G-box motif (5'-CACGTG-3') found in many light-regulated promoters. Promotes the expression of SOM, and thus modulates responses to abscisic acid (ABA) and gibberellic acid (GA). The protein is Transcription factor PIF1 of Arabidopsis thaliana (Mouse-ear cress).